A 388-amino-acid polypeptide reads, in one-letter code: GDP-4-keto-6-deoxy-D-mannose 3-dehydratase (388 aa).

26–29 (KMFT) lines the GDP-4-dehydro-alpha-D-rhamnose pocket. The helical transmembrane segment at 49–69 (YAVMVSSGSTANLLMIAALFF) threads the bilayer. Residues 56–57 (GS), Trp-88, Glu-162, and Ser-183 each bind pyridoxal 5'-phosphate. Catalysis depends on His-188, which acts as the Proton donor/acceptor. His-215 provides a ligand contact to L-glutamate. Arg-219 serves as a coordination point for GDP-4-dehydro-alpha-D-rhamnose. Asn-248 serves as a coordination point for pyridoxal 5'-phosphate. Arg-250 serves as a coordination point for L-glutamate. Glu-329 is a binding site for GDP-4-dehydro-alpha-D-rhamnose.

The protein belongs to the DegT/DnrJ/EryC1 family. As to quaternary structure, homodimer. It depends on pyridoxal 5'-phosphate as a cofactor.

Its subcellular location is the cell membrane. It catalyses the reaction GDP-4-dehydro-alpha-D-rhamnose + L-glutamate = GDP-4-dehydro-3,6-dideoxy-alpha-D-mannose + 2-oxoglutarate + NH4(+). Its pathway is nucleotide-sugar metabolism; GDP-L-colitose biosynthesis. Functionally, involved in the biosynthesis of L-colitose, a 3,6-dideoxyhexose present in the O-antigen region of lipopolysaccharides (LPS), where it serves as an antigenic determinant and is vital for bacterial defense and survival. Catalyzes the removal of the C3'-hydroxyl group from GDP-4-keto-6-deoxy-D-mannose via a combined transamination-deoxygenation reaction. The catalysis is initiated by a transamination step in which pyridoxal 5'-phosphate (PLP) is converted to pyridoxamine 5'-phosphate (PMP) in the presence of L-glutamate. This coenzyme then forms a Schiff base with GDP-4-keto-6-deoxy-D-mannose and the resulting adduct undergoes a PMP-mediated beta-dehydration reaction to give a sugar enamine intermediate, which after tautomerization and hydrolysis to release ammonia yields GDP-4-keto-3,6-dideoxy-D-mannose as a product. In vitro, is able to catalyze the formation of GDP-4-keto-3,6-dideoxymannose using GDP-perosamine rather than GDP-4-keto-6-deoxymannose as a substrate, with no need of glutamate. This Escherichia coli O55:H7 (strain CB9615 / EPEC) protein is GDP-4-keto-6-deoxy-D-mannose 3-dehydratase.